The following is a 446-amino-acid chain: Kynurenine 3-monooxygenase (446 aa).

This sequence belongs to the aromatic-ring hydroxylase family. KMO subfamily. FAD serves as cofactor.

The catalysed reaction is L-kynurenine + NADPH + O2 + H(+) = 3-hydroxy-L-kynurenine + NADP(+) + H2O. It functions in the pathway cofactor biosynthesis; NAD(+) biosynthesis; quinolinate from L-kynurenine: step 1/3. Catalyzes the hydroxylation of L-kynurenine (L-Kyn) to form 3-hydroxy-L-kynurenine (L-3OHKyn). Required for synthesis of quinolinic acid. This chain is Kynurenine 3-monooxygenase, found in Flavobacterium johnsoniae (strain ATCC 17061 / DSM 2064 / JCM 8514 / BCRC 14874 / CCUG 350202 / NBRC 14942 / NCIMB 11054 / UW101) (Cytophaga johnsonae).